Reading from the N-terminus, the 258-residue chain is Distal membrane-arm assembly complex protein 2 (258 aa).

Belongs to the ATP synthase subunit s family. As to quaternary structure, interacts with incompletely assembled mitochondrial NADH:ubiquinone oxidoreductase complex (complex I).

The protein localises to the mitochondrion. Its function is as follows. Required for the assembly of the mitochondrial NADH:ubiquinone oxidoreductase complex (complex I). Involved in the assembly of the distal region of complex I. This Mus musculus (Mouse) protein is Distal membrane-arm assembly complex protein 2 (Dmac2).